The sequence spans 439 residues: General transcription factor IIE subunit 1 (439 aa).

An N-acetylalanine modification is found at A2. Residues 14–104 form the HTH TFE/IIEalpha-type domain; the sequence is LKRLAKYVIR…NYRTLVNVVK (91 aa). N6-acetyllysine is present on K67. Residues C129, C132, C154, and C157 each coordinate Zn(2+). Residues 129-157 form a C4-type zinc finger; it reads CPVCSSTFTDLEANQLFDPMTGTFRCTFC. Phosphoserine is present on S268. A compositionally biased stretch (low complexity) spans 333–344; that stretch reads SSAMAGSVGAAA. The disordered stretch occupies residues 333-392; the sequence is SSAMAGSVGAAAPVTTANGSDSESETSESDDDSPPRPAAVAVHKREEDEEEDDEFEEVAD. Acidic residues-rich tracts occupy residues 354 to 364 and 379 to 392; these read SESETSESDDD and EDEEEDDEFEEVAD.

The protein belongs to the TFIIE alpha subunit family. As to quaternary structure, tetramer of two alpha and two beta chains. Interacts with TAF6/TAFII80. Interacts with ATF7IP. Interacts with SND1. Part of TBP-based Pol II pre-initiation complex (PIC), in which Pol II core assembles with general transcription factors and other specific initiation factors including GTF2E1, GTF2E2, GTF2F1, GTF2F2, TCEA1, ERCC2, ERCC3, GTF2H2, GTF2H3, GTF2H4, GTF2H5, GTF2A1, GTF2A2, GTF2B and TBP; this large multi-subunit PIC complex mediates DNA unwinding and targets Pol II core to the transcription start site where the first phosphodiester bond forms.

The protein resides in the nucleus. Its function is as follows. Recruits TFIIH to the initiation complex and stimulates the RNA polymerase II C-terminal domain kinase and DNA-dependent ATPase activities of TFIIH. Both TFIIH and TFIIE are required for promoter clearance by RNA polymerase. In Pongo abelii (Sumatran orangutan), this protein is General transcription factor IIE subunit 1 (GTF2E1).